A 558-amino-acid polypeptide reads, in one-letter code: Tektin-5 (558 aa).

A coiled-coil region spans residues 347–381 (ISEETDVKNKLQTQLAKILQEIFQAENTIMLLERA).

It belongs to the tektin family. As to quaternary structure, microtubule inner protein component of sperm flagellar doublet microtubules. Interacts with TEKT3. In terms of processing, ubiquitinated, leading to its degradation. Deubiquitinated by USP16, promoting its stability. Specifically expressed in testis.

It is found in the cytoplasm. Its subcellular location is the cytoskeleton. It localises to the flagellum axoneme. In terms of biological role, sperm-specific microtubule inner protein (MIP) part of the dynein-decorated doublet microtubules (DMTs) in flagellar axoneme. Forms an extensive interaction network in different conformations that reinforces the helix bundle composed by other tektin proteins (TEKT1 to TEKT4) and MIPs to anchor the tektin bundle onto the tubulin wall of A-tubule of the sperm flagellum. In Rattus norvegicus (Rat), this protein is Tektin-5.